A 405-amino-acid chain; its full sequence is Tryptophan synthase beta chain (405 aa).

At Lys-95 the chain carries N6-(pyridoxal phosphate)lysine.

It belongs to the TrpB family. As to quaternary structure, tetramer of two alpha and two beta chains. Pyridoxal 5'-phosphate is required as a cofactor.

The enzyme catalyses (1S,2R)-1-C-(indol-3-yl)glycerol 3-phosphate + L-serine = D-glyceraldehyde 3-phosphate + L-tryptophan + H2O. The protein operates within amino-acid biosynthesis; L-tryptophan biosynthesis; L-tryptophan from chorismate: step 5/5. The beta subunit is responsible for the synthesis of L-tryptophan from indole and L-serine. The polypeptide is Tryptophan synthase beta chain (Pseudomonas putida (strain GB-1)).